A 292-amino-acid polypeptide reads, in one-letter code: Ribosomal protein L11 methyltransferase (292 aa).

The S-adenosyl-L-methionine site is built by threonine 143, glycine 164, aspartate 186, and asparagine 228.

This sequence belongs to the methyltransferase superfamily. PrmA family.

The protein resides in the cytoplasm. The catalysed reaction is L-lysyl-[protein] + 3 S-adenosyl-L-methionine = N(6),N(6),N(6)-trimethyl-L-lysyl-[protein] + 3 S-adenosyl-L-homocysteine + 3 H(+). Functionally, methylates ribosomal protein L11. This chain is Ribosomal protein L11 methyltransferase, found in Tolumonas auensis (strain DSM 9187 / NBRC 110442 / TA 4).